The sequence spans 1382 residues: Hepatocyte growth factor receptor (1382 aa).

An N-terminal signal peptide occupies residues methionine 1 to glycine 24. The Extracellular portion of the chain corresponds to glutamate 25–glycine 935. The 490-residue stretch at lysine 27–leucine 516 folds into the Sema domain. The N-linked (GlcNAc...) asparagine glycan is linked to asparagine 45. 4 disulfide bridges follow: cysteine 95-cysteine 101, cysteine 98-cysteine 160, cysteine 133-cysteine 141, and cysteine 173-cysteine 176. An N-linked (GlcNAc...) asparagine glycan is attached at asparagine 106. 2 N-linked (GlcNAc...) asparagine glycosylation sites follow: asparagine 203 and asparagine 359. 2 cysteine pairs are disulfide-bonded: cysteine 299-cysteine 364 and cysteine 386-cysteine 398. 2 N-linked (GlcNAc...) asparagine glycosylation sites follow: asparagine 400 and asparagine 406. 4 disulfides stabilise this stretch: cysteine 521–cysteine 539, cysteine 527–cysteine 562, cysteine 530–cysteine 546, and cysteine 542–cysteine 552. IPT/TIG domains are found at residues proline 564 to valine 656, proline 658 to arginine 740, and proline 743 to valine 837. O-linked (Man) threonine glycosylation is present at threonine 583. Residues asparagine 608 and asparagine 636 are each glycosylated (N-linked (GlcNAc...) asparagine). Residues threonine 677 and threonine 762 are each glycosylated (O-linked (Man) threonine). N-linked (GlcNAc...) asparagine glycans are attached at residues asparagine 786 and asparagine 880. The chain crosses the membrane as a helical span at residues leucine 936 to tryptophan 956. Over leucine 957–glutamate 1379 the chain is Cytoplasmic. A Phosphoserine modification is found at serine 967. The residue at position 978 (threonine 978) is a Phosphothreonine. Residues serine 991, serine 998, and serine 1001 each carry the phosphoserine modification. Tyrosine 1004 is subject to Phosphotyrosine. The Protein kinase domain maps to valine 1079–isoleucine 1346. ATP contacts are provided by residues isoleucine 1085 to valine 1093 and lysine 1111. Catalysis depends on aspartate 1205, which acts as the Proton acceptor. The tract at residues leucine 1213–threonine 1382 is interaction with RANBP9. At tyrosine 1231 the chain carries Phosphotyrosine. Phosphotyrosine; by autocatalysis occurs at positions 1235 and 1236. At threonine 1290 the chain carries Phosphothreonine. Positions tryptophan 1321–valine 1360 are interaction with MUC20. Tyrosine 1350 and tyrosine 1357 each carry phosphotyrosine; by autocatalysis. At tyrosine 1366 the chain carries Phosphotyrosine.

Belongs to the protein kinase superfamily. Tyr protein kinase family. As to quaternary structure, heterodimer made of an alpha chain (50 kDa) and a beta chain (145 kDa) which are disulfide linked. Binds PLXNB1. Interacts when phosphorylated with downstream effectors including STAT3, PIK3R1, SRC, PCLG1, GRB2 and GAB1. Interacts with SPSB1, SPSB2 and SPSB4. Interacts with INPP5D/SHIP1. When phosphorylated at Tyr-1357, interacts with INPPL1/SHIP2. Interacts with RANBP9 and RANBP10, as well as SPSB1, SPSB2, SPSB3 and SPSB4. SPSB1 binding occurs in the presence and in the absence of HGF, however HGF treatment has a positive effect on this interaction. Interacts with MUC20; prevents interaction with GRB2 and suppresses hepatocyte growth factor-induced cell proliferation. Interacts with GRB10. Interacts with PTPN1 and PTPN2. Interacts with HSP90AA1 and HSP90AB1; the interaction suppresses MET kinase activity. Interacts with tensin TNS3. Interacts (when phosphorylated) with tensin TNS4 (via SH2 domain); the interaction increases MET protein stability by inhibiting MET endocytosis and subsequent lysosomal degradation. Post-translationally, autophosphorylated in response to ligand binding on Tyr-1235 and Tyr-1236 in the kinase domain leading to further phosphorylation of Tyr-1350 and Tyr-1357 in the C-terminal multifunctional docking site. Dephosphorylated by PTPRJ at Tyr-1350 and Tyr-1366. Dephosphorylated by PTPN1 and PTPN2. Ubiquitinated. Ubiquitination by CBL regulates the receptor stability and activity through proteasomal degradation. In terms of processing, O-mannosylation of IPT/TIG domains by TMEM260 is required for protein maturation. O-mannosylated residues are composed of single mannose glycans that are not elongated or modified. In terms of tissue distribution, expressed at highest levels in lung, liver and kidney, also expressed in stomach, intestine, spleen, testis and brain. Not expressed in heart or muscle.

It localises to the membrane. It catalyses the reaction L-tyrosyl-[protein] + ATP = O-phospho-L-tyrosyl-[protein] + ADP + H(+). With respect to regulation, in its inactive state, the C-terminal tail interacts with the catalytic domain and inhibits the kinase activity. Upon ligand binding, the C-terminal tail is displaced and becomes phosphorylated, thus increasing the kinase activity. Receptor tyrosine kinase that transduces signals from the extracellular matrix into the cytoplasm by binding to hepatocyte growth factor/HGF ligand. Regulates many physiological processes including proliferation, scattering, morphogenesis and survival. Ligand binding at the cell surface induces autophosphorylation of MET on its intracellular domain that provides docking sites for downstream signaling molecules. Following activation by ligand, interacts with the PI3-kinase subunit PIK3R1, PLCG1, SRC, GRB2, STAT3 or the adapter GAB1. Recruitment of these downstream effectors by MET leads to the activation of several signaling cascades including the RAS-ERK, PI3 kinase-AKT, or PLCgamma-PKC. The RAS-ERK activation is associated with the morphogenetic effects while PI3K/AKT coordinates prosurvival effects. During embryonic development, MET signaling plays a role in gastrulation, development and migration of muscles and neuronal precursors, angiogenesis and kidney formation. In adults, participates in wound healing as well as organ regeneration and tissue remodeling. Also promotes differentiation and proliferation of hematopoietic cells. The chain is Hepatocyte growth factor receptor (Met) from Rattus norvegicus (Rat).